Consider the following 393-residue polypeptide: uncharacterized protein (393 aa).

The B box-type zinc-finger motif lies at 6 to 47; sequence KYDNKCAIHKEHKIKMICATCKDVVCNECILLDHNGHKFGRI. 4 residues coordinate Zn(2+): Cys-11, His-14, Cys-34, and His-39.

This is an uncharacterized protein from Dictyostelium discoideum (Social amoeba).